The primary structure comprises 142 residues: Nucleoside diphosphate kinase (142 aa).

6 residues coordinate ATP: Lys11, Phe59, Arg87, Thr93, Arg107, and Asn117. The Pros-phosphohistidine intermediate role is filled by His120.

The protein belongs to the NDK family. Homotetramer. The cofactor is Mg(2+).

Its subcellular location is the cytoplasm. The enzyme catalyses a 2'-deoxyribonucleoside 5'-diphosphate + ATP = a 2'-deoxyribonucleoside 5'-triphosphate + ADP. The catalysed reaction is a ribonucleoside 5'-diphosphate + ATP = a ribonucleoside 5'-triphosphate + ADP. Functionally, major role in the synthesis of nucleoside triphosphates other than ATP. The ATP gamma phosphate is transferred to the NDP beta phosphate via a ping-pong mechanism, using a phosphorylated active-site intermediate. The sequence is that of Nucleoside diphosphate kinase from Aquifex aeolicus (strain VF5).